The chain runs to 1061 residues: Calcium-transporting ATPase 4, endoplasmic reticulum-type (1061 aa).

A disordered region spans residues M1–S21. The Cytoplasmic segment spans residues M1–S70. A helical transmembrane segment spans residues I71–A91. The Lumenal segment spans residues V92 to E115. The helical transmembrane segment at P116–T135 threads the bilayer. Residues N136 to L278 lie on the Cytoplasmic side of the membrane. Residues N279–L298 form a helical membrane-spanning segment. The Lumenal portion of the chain corresponds to I299 to Y327. Residues F328–A345 traverse the membrane as a helical segment. V336, A337, I339, and E341 together coordinate Ca(2+). Residues V346–M786 lie on the Cytoplasmic side of the membrane. D383 functions as the 4-aspartylphosphate intermediate in the catalytic mechanism. Positions 731 and 735 each coordinate Mg(2+). The chain crosses the membrane as a helical span at residues K787–L806. Ca(2+)-binding residues include N797 and E800. Over T807–M816 the chain is Lumenal. The chain crosses the membrane as a helical span at residues I817–G837. Ca(2+)-binding residues include N825, T828, and D829. The Cytoplasmic portion of the chain corresponds to F838–L857. A helical membrane pass occupies residues I858–V880. Residues F881–S950 are Lumenal-facing. A helical membrane pass occupies residues T951–S970. E961 contacts Ca(2+). The Cytoplasmic segment spans residues E971–N983. The helical transmembrane segment at P984–Y1002 threads the bilayer. The Lumenal segment spans residues V1003–L1017. A helical transmembrane segment spans residues N1018–K1038. At F1039 to E1061 the chain is on the cytoplasmic side.

This sequence belongs to the cation transport ATPase (P-type) (TC 3.A.3) family. Type IIA subfamily.

Its subcellular location is the membrane. The catalysed reaction is Ca(2+)(in) + ATP + H2O = Ca(2+)(out) + ADP + phosphate + H(+). In terms of biological role, this magnesium-dependent enzyme catalyzes the hydrolysis of ATP coupled with the translocation of calcium from the cytosol to an endomembrane compartment. The polypeptide is Calcium-transporting ATPase 4, endoplasmic reticulum-type (ECA4) (Arabidopsis thaliana (Mouse-ear cress)).